We begin with the raw amino-acid sequence, 460 residues long: MSSTKLEDSLSRRNWSSASELNETQEPFLNPTDYDDEEFLRYLWREYLHPKEYEWVLIAGYIIVFVVALIGNVLVCVAVWKNHHMRTVTNYFIVNLSLADVLVTITCLPATLVVDITETWFFGQSLCKVIPYLQTVSVSVSVLTLSCIALDRWYAICHPLMFKSTAKRARNSIVVIWIVSCIIMIPQAIVMECSSMLPGLANKTTLFTVCDEHWGGEVYPKMYHICFFLVTYMAPLCLMILAYLQIFRKLWCRQIPGTSSVVQRKWKQQQPVSQPRGSGQQSKARISAVAAEIKQIRARRKTARMLMVVLLVFAICYLPISILNVLKRVFGMFTHTEDRETVYAWFTFSHWLVYANSAANPIIYNFLSGKFREEFKAAFSCCLGVHHRQGDRLARGRTSTESRKSLTTQISNFDNVSKLSEHVVLTSISTLPAANGAGPLQNWYLQQGVPSSLLSTWLEV.

Topologically, residues 1–54 (MSSTKLEDSLSRRNWSSASELNETQEPFLNPTDYDDEEFLRYLWREYLHPKEYE) are extracellular. 2 N-linked (GlcNAc...) asparagine glycosylation sites follow: N14 and N22. The interval 33-49 (DYDDEEFLRYLWREYLH) is required for response to orexin-A. Residues 55 to 75 (WVLIAGYIIVFVVALIGNVLV) form a helical membrane-spanning segment. Topologically, residues 76-88 (CVAVWKNHHMRTV) are cytoplasmic. Residues 89–110 (TNYFIVNLSLADVLVTITCLPA) traverse the membrane as a helical segment. Topologically, residues 111-127 (TLVVDITETWFFGQSLC) are extracellular. C127 and C210 are joined by a disulfide. The helical transmembrane segment at 128–150 (KVIPYLQTVSVSVSVLTLSCIAL) threads the bilayer. The Cytoplasmic segment spans residues 151 to 170 (DRWYAICHPLMFKSTAKRAR). Residues 171 to 191 (NSIVVIWIVSCIIMIPQAIVM) traverse the membrane as a helical segment. Topologically, residues 192–222 (ECSSMLPGLANKTTLFTVCDEHWGGEVYPKM) are extracellular. N202 carries an N-linked (GlcNAc...) asparagine glycan. The helical transmembrane segment at 223–243 (YHICFFLVTYMAPLCLMILAY) threads the bilayer. At 244–304 (LQIFRKLWCR…QIRARRKTAR (61 aa)) the chain is on the cytoplasmic side. Residues 305–326 (MLMVVLLVFAICYLPISILNVL) form a helical membrane-spanning segment. Residues 327–342 (KRVFGMFTHTEDRETV) lie on the Extracellular side of the membrane. A helical transmembrane segment spans residues 343 to 366 (YAWFTFSHWLVYANSAANPIIYNF). The Cytoplasmic portion of the chain corresponds to 367–460 (LSGKFREEFK…SSLLSTWLEV (94 aa)).

Belongs to the G-protein coupled receptor 1 family. As to expression, widely expressed. Isoform 2 not detected in skeletal muscle and kidney.

The protein resides in the cell membrane. Functionally, nonselective, high-affinity receptor for both orexin-A and orexin-B neuropeptides. Triggers an increase in cytoplasmic Ca(2+) levels in response to orexin-A binding. The sequence is that of Orexin receptor type 2 (Hcrtr2) from Mus musculus (Mouse).